Here is a 407-residue protein sequence, read N- to C-terminus: 1-deoxy-D-xylulose 5-phosphate reductoisomerase (407 aa).

T10, G11, S12, I13, G36, and N131 together coordinate NADPH. Residue K132 participates in 1-deoxy-D-xylulose 5-phosphate binding. E133 serves as a coordination point for NADPH. Position 155 (D155) interacts with Mn(2+). S156, E157, S181, and H204 together coordinate 1-deoxy-D-xylulose 5-phosphate. E157 is a Mn(2+) binding site. NADPH is bound at residue G210. 4 residues coordinate 1-deoxy-D-xylulose 5-phosphate: S217, N222, K223, and E226. E226 is a binding site for Mn(2+).

It belongs to the DXR family. The cofactor is Mg(2+). Requires Mn(2+) as cofactor.

The enzyme catalyses 2-C-methyl-D-erythritol 4-phosphate + NADP(+) = 1-deoxy-D-xylulose 5-phosphate + NADPH + H(+). It participates in isoprenoid biosynthesis; isopentenyl diphosphate biosynthesis via DXP pathway; isopentenyl diphosphate from 1-deoxy-D-xylulose 5-phosphate: step 1/6. Catalyzes the NADPH-dependent rearrangement and reduction of 1-deoxy-D-xylulose-5-phosphate (DXP) to 2-C-methyl-D-erythritol 4-phosphate (MEP). In Cutibacterium acnes (strain DSM 16379 / KPA171202) (Propionibacterium acnes), this protein is 1-deoxy-D-xylulose 5-phosphate reductoisomerase.